The chain runs to 94 residues: Small ribosomal subunit protein bS18 (94 aa).

Residues 1 to 11 (MANERPTSQQR) show a composition bias toward polar residues. A disordered region spans residues 1 to 24 (MANERPTSQQRPAGGPRKRRPFQR).

The protein belongs to the bacterial ribosomal protein bS18 family. Part of the 30S ribosomal subunit. Forms a tight heterodimer with protein bS6.

In terms of biological role, binds as a heterodimer with protein bS6 to the central domain of the 16S rRNA, where it helps stabilize the platform of the 30S subunit. The polypeptide is Small ribosomal subunit protein bS18 (Pelobacter propionicus (strain DSM 2379 / NBRC 103807 / OttBd1)).